Here is a 511-residue protein sequence, read N- to C-terminus: Bifunctional purine biosynthesis protein PurH (511 aa).

One can recognise an MGS-like domain in the interval 1–144 (MKTALLSVSD…KNFASVLPVV (144 aa)).

The protein belongs to the PurH family.

The enzyme catalyses (6R)-10-formyltetrahydrofolate + 5-amino-1-(5-phospho-beta-D-ribosyl)imidazole-4-carboxamide = 5-formamido-1-(5-phospho-D-ribosyl)imidazole-4-carboxamide + (6S)-5,6,7,8-tetrahydrofolate. It catalyses the reaction IMP + H2O = 5-formamido-1-(5-phospho-D-ribosyl)imidazole-4-carboxamide. It participates in purine metabolism; IMP biosynthesis via de novo pathway; 5-formamido-1-(5-phospho-D-ribosyl)imidazole-4-carboxamide from 5-amino-1-(5-phospho-D-ribosyl)imidazole-4-carboxamide (10-formyl THF route): step 1/1. It functions in the pathway purine metabolism; IMP biosynthesis via de novo pathway; IMP from 5-formamido-1-(5-phospho-D-ribosyl)imidazole-4-carboxamide: step 1/1. This Pediococcus pentosaceus (strain ATCC 25745 / CCUG 21536 / LMG 10740 / 183-1w) protein is Bifunctional purine biosynthesis protein PurH.